The sequence spans 186 residues: Ribosome-recycling factor (186 aa).

Residues 140–163 (LKKAEKDGDIGQDEGRSLSERVQK) form a disordered region.

It belongs to the RRF family.

The protein resides in the cytoplasm. Functionally, responsible for the release of ribosomes from messenger RNA at the termination of protein biosynthesis. May increase the efficiency of translation by recycling ribosomes from one round of translation to another. The protein is Ribosome-recycling factor of Rhizobium rhizogenes (strain K84 / ATCC BAA-868) (Agrobacterium radiobacter).